The chain runs to 599 residues: Elongation factor 4 (599 aa).

Positions 4-186 (EHIRNFSIIA…EIVKKIPPPK (183 aa)) constitute a tr-type G domain. GTP is bound by residues 16-21 (DHGKST) and 133-136 (NKID).

It belongs to the TRAFAC class translation factor GTPase superfamily. Classic translation factor GTPase family. LepA subfamily.

It is found in the cell inner membrane. It catalyses the reaction GTP + H2O = GDP + phosphate + H(+). Required for accurate and efficient protein synthesis under certain stress conditions. May act as a fidelity factor of the translation reaction, by catalyzing a one-codon backward translocation of tRNAs on improperly translocated ribosomes. Back-translocation proceeds from a post-translocation (POST) complex to a pre-translocation (PRE) complex, thus giving elongation factor G a second chance to translocate the tRNAs correctly. Binds to ribosomes in a GTP-dependent manner. This is Elongation factor 4 from Citrifermentans bemidjiense (strain ATCC BAA-1014 / DSM 16622 / JCM 12645 / Bem) (Geobacter bemidjiensis).